A 165-amino-acid chain; its full sequence is Phosphopantetheine adenylyltransferase (165 aa).

Ser-10 serves as a coordination point for substrate. ATP contacts are provided by residues 10-11 (SF) and His-18. Substrate contacts are provided by Lys-42, Thr-79, and Arg-93. Residues 94–96 (GLR), Glu-104, and 129–135 (VRPITAT) each bind ATP.

The protein belongs to the bacterial CoaD family. Homohexamer. The cofactor is Mg(2+).

It localises to the cytoplasm. The enzyme catalyses (R)-4'-phosphopantetheine + ATP + H(+) = 3'-dephospho-CoA + diphosphate. It participates in cofactor biosynthesis; coenzyme A biosynthesis; CoA from (R)-pantothenate: step 4/5. In terms of biological role, reversibly transfers an adenylyl group from ATP to 4'-phosphopantetheine, yielding dephospho-CoA (dPCoA) and pyrophosphate. The polypeptide is Phosphopantetheine adenylyltransferase (Rhodopseudomonas palustris (strain HaA2)).